The chain runs to 76 residues: UPF0346 protein lhv_1069 (76 aa).

This sequence belongs to the UPF0346 family.

The protein is UPF0346 protein lhv_1069 of Lactobacillus helveticus (strain DPC 4571).